The chain runs to 487 residues: Protein nucleotidyltransferase YdiU (487 aa).

Residues glycine 86, glycine 88, arginine 89, lysine 109, aspartate 121, glycine 122, arginine 172, and arginine 179 each contribute to the ATP site. The Proton acceptor role is filled by aspartate 248. Mg(2+) is bound by residues asparagine 249 and aspartate 258. Aspartate 258 contributes to the ATP binding site.

This sequence belongs to the SELO family. It depends on Mg(2+) as a cofactor. Mn(2+) serves as cofactor.

The catalysed reaction is L-seryl-[protein] + ATP = 3-O-(5'-adenylyl)-L-seryl-[protein] + diphosphate. The enzyme catalyses L-threonyl-[protein] + ATP = 3-O-(5'-adenylyl)-L-threonyl-[protein] + diphosphate. It carries out the reaction L-tyrosyl-[protein] + ATP = O-(5'-adenylyl)-L-tyrosyl-[protein] + diphosphate. It catalyses the reaction L-histidyl-[protein] + UTP = N(tele)-(5'-uridylyl)-L-histidyl-[protein] + diphosphate. The catalysed reaction is L-seryl-[protein] + UTP = O-(5'-uridylyl)-L-seryl-[protein] + diphosphate. The enzyme catalyses L-tyrosyl-[protein] + UTP = O-(5'-uridylyl)-L-tyrosyl-[protein] + diphosphate. In terms of biological role, nucleotidyltransferase involved in the post-translational modification of proteins. It can catalyze the addition of adenosine monophosphate (AMP) or uridine monophosphate (UMP) to a protein, resulting in modifications known as AMPylation and UMPylation. The chain is Protein nucleotidyltransferase YdiU from Sphingopyxis alaskensis (strain DSM 13593 / LMG 18877 / RB2256) (Sphingomonas alaskensis).